We begin with the raw amino-acid sequence, 441 residues long: Putative serine/threonine-protein kinase F31E3.2 (441 aa).

Positions 1–16 (MGNVATRKRPGCHHHI) are enriched in basic residues. Residues 1–41 (MGNVATRKRPGCHHHIGRNEENLDDDEDGPAKKRLRIGEPQ) form a disordered region. The 256-residue stretch at 126–381 (FVLERQLGRG…FTVLHAHPFF (256 aa)) folds into the Protein kinase domain. ATP is bound by residues 132-140 (LGRGSFGVV) and K156. The active-site Proton acceptor is D253.

The protein belongs to the protein kinase superfamily. Ser/Thr protein kinase family.

It carries out the reaction L-seryl-[protein] + ATP = O-phospho-L-seryl-[protein] + ADP + H(+). The enzyme catalyses L-threonyl-[protein] + ATP = O-phospho-L-threonyl-[protein] + ADP + H(+). The polypeptide is Putative serine/threonine-protein kinase F31E3.2 (Caenorhabditis elegans).